A 129-amino-acid chain; its full sequence is MGKAKAPRRLADNEARAVLRTIRISPQKLNLVAALIRGKKVATALSDLEFSAKRISGTVKKTLESAIANAENNHDLDVDALVVAEAYVGKSIVMKRFHARGRGRASRIEKPFSHLTIVVREVEEKGEAA.

It belongs to the universal ribosomal protein uL22 family. In terms of assembly, part of the 50S ribosomal subunit.

In terms of biological role, this protein binds specifically to 23S rRNA; its binding is stimulated by other ribosomal proteins, e.g. L4, L17, and L20. It is important during the early stages of 50S assembly. It makes multiple contacts with different domains of the 23S rRNA in the assembled 50S subunit and ribosome. The globular domain of the protein is located near the polypeptide exit tunnel on the outside of the subunit, while an extended beta-hairpin is found that lines the wall of the exit tunnel in the center of the 70S ribosome. The polypeptide is Large ribosomal subunit protein uL22 (Mesorhizobium japonicum (strain LMG 29417 / CECT 9101 / MAFF 303099) (Mesorhizobium loti (strain MAFF 303099))).